The sequence spans 106 residues: Large ribosomal subunit protein eL42 (106 aa).

Belongs to the eukaryotic ribosomal protein eL42 family.

The polypeptide is Large ribosomal subunit protein eL42 (RPL44) (Kluyveromyces lactis (strain ATCC 8585 / CBS 2359 / DSM 70799 / NBRC 1267 / NRRL Y-1140 / WM37) (Yeast)).